Reading from the N-terminus, the 179-residue chain is MNRLKEKYVKEITPALVSKFEYKSVMQVPKIEKIVINMGVGDAVQNAKAIDTAVEELTFIAGQKPVVTRAKKSIAGFRLREGMPIGAKVTLRGERMYDFLDKLISVSLPRVRDFRGISKKSFDGRGNYTLGIKEQLIFPEIDYDKVTKVRGMDIVIVTTANTDEEARELLTQVGMPFQK.

Belongs to the universal ribosomal protein uL5 family. Part of the 50S ribosomal subunit; part of the 5S rRNA/L5/L18/L25 subcomplex. Contacts the 5S rRNA and the P site tRNA. Forms a bridge to the 30S subunit in the 70S ribosome.

This is one of the proteins that bind and probably mediate the attachment of the 5S RNA into the large ribosomal subunit, where it forms part of the central protuberance. In the 70S ribosome it contacts protein S13 of the 30S subunit (bridge B1b), connecting the 2 subunits; this bridge is implicated in subunit movement. Contacts the P site tRNA; the 5S rRNA and some of its associated proteins might help stabilize positioning of ribosome-bound tRNAs. This chain is Large ribosomal subunit protein uL5, found in Bacillus pumilus (strain SAFR-032).